Here is a 212-residue protein sequence, read N- to C-terminus: MVIKLYGSAMSTARVLVTLLEKELPYEHILVDISKGDQNKEEYLKLQPFGKVPVLDDNGFIMYESRAICRYLARKYDSGTKLIPDVDDHEAYGRFEQGCSIEYSYFAAAAETLGTELVIKKYKGLGEPDMTRVAQAEADFDKVFFEYDKILAKQKYLTGDEISLVDLFHLPNASALKAFGYQGTFEKYPNVNRWFSGLQARETWIKATAEAR.

The region spanning 1–80 (MVIKLYGSAM…YLARKYDSGT (80 aa)) is the GST N-terminal domain. Glutathione contacts are provided by residues 51-52 (KV) and 64-65 (ES). In terms of domain architecture, GST C-terminal spans 88–212 (DHEAYGRFEQ…TWIKATAEAR (125 aa)).

This sequence belongs to the GST superfamily.

The enzyme catalyses RX + glutathione = an S-substituted glutathione + a halide anion + H(+). The protein operates within secondary metabolite biosynthesis. In terms of biological role, glutathione S-transferase; part of the gene cluster that mediates the biosynthesis of hypothemycin, a resorcylic acid lactone (RAL) that irreversibly inhibits a subset of protein kinases with a conserved cysteine in the ATP binding site such as human ERK2. The first step is performed by both PKSs hmp3 and hmp8 and leads to the production of 7',8'-dehydrozearalenol (DHZ). The highly reducing PKS hpm8 synthesizes the reduced hexaketide (7S,11S,2E,8E)-7,11-dihydroxy-dodeca-2,8-dienoate, which is transferred downstream to the non-reducing PKS hpm3. Hpm3 then extends the reduced hexaketide to a nonaketide, after which regioselective cyclization and macrolactonization affords DHZ. The next step is the conversion of DHZ into aigialomycin C and is performed by the O-methyltransferase hmp5, the FAD-binding monooxygenase hmp7, and the cytochrome P450 monooxygenase hmp1. The wide substrate tolerance of the hmp5 and hmp7 implies that the reactions from DHZ to aigialomycin C can occur in any order. The steps from aigialomycin C to hypothemycin are less well established. The FAD-linked oxidoreductase hmp9 presumably catalyzes oxidation of the C-6' hydroxyl to a ketone. The timing of this oxidation is important, since the resulting enone functional group is a Michael acceptor that can react spontaneously with glutathione, an abundant metabolite in fungal cells. The glutathione S-transferase hmp2 catalyzes cis-trans isomerization of the 7',8' double bond with equilibrium favoring the trans isomer. The hpm6-encoded transporter might preferentially pump hypothemycin out of the cell relative to the trans isomer aigialomycin A. The cis-to-trans isomerization may be coupled with C-4' hydroxylation, since all known hypothemycin analogs containing the enone functional group also have hydroxyl groups at both C-4' and C-5'. The protein is Glutathione S-transferase hmp2 of Hypomyces subiculosus (Nectria subiculosa).